Here is a 274-residue protein sequence, read N- to C-terminus: Formamidopyrimidine-DNA glycosylase (274 aa).

P2 functions as the Schiff-base intermediate with DNA in the catalytic mechanism. The Proton donor role is filled by E3. The active-site Proton donor; for beta-elimination activity is K58. DNA-binding residues include H91, R110, and K152. The FPG-type zinc finger occupies 237–271 (KVYGRKNLPCLVCENKIETVVIAGRHSAFCPHCQP). The Proton donor; for delta-elimination activity role is filled by R261.

It belongs to the FPG family. In terms of assembly, monomer. It depends on Zn(2+) as a cofactor.

The catalysed reaction is Hydrolysis of DNA containing ring-opened 7-methylguanine residues, releasing 2,6-diamino-4-hydroxy-5-(N-methyl)formamidopyrimidine.. It catalyses the reaction 2'-deoxyribonucleotide-(2'-deoxyribose 5'-phosphate)-2'-deoxyribonucleotide-DNA = a 3'-end 2'-deoxyribonucleotide-(2,3-dehydro-2,3-deoxyribose 5'-phosphate)-DNA + a 5'-end 5'-phospho-2'-deoxyribonucleoside-DNA + H(+). Involved in base excision repair of DNA damaged by oxidation or by mutagenic agents. Acts as a DNA glycosylase that recognizes and removes damaged bases. Has a preference for oxidized purines, such as 7,8-dihydro-8-oxoguanine (8-oxoG). Has AP (apurinic/apyrimidinic) lyase activity and introduces nicks in the DNA strand. Cleaves the DNA backbone by beta-delta elimination to generate a single-strand break at the site of the removed base with both 3'- and 5'-phosphates. The protein is Formamidopyrimidine-DNA glycosylase of Legionella pneumophila subsp. pneumophila (strain Philadelphia 1 / ATCC 33152 / DSM 7513).